We begin with the raw amino-acid sequence, 229 residues long: MIRAIVTDIEGTTSDIRFVHNVLFPYARERLAGFVTAQQFVEPVKTILDNLREEIAQPAAGAEELIATLFAFMDEDRKSTALKALQGIIWRDGYVHGDFTGHLYPDVLPALEKWKSQGIDLYVYSSGSVAAQKLLFGYSDEGDITHLFNGYFDTLVGAKREAQSYRNIAEQLGQPPAAILFLSDIHQELDAAEEAGFRTLQLVRGDRDPASHHPQVQRFDDIHPEQIPA.

The disordered stretch occupies residues 206–229 (DRDPASHHPQVQRFDDIHPEQIPA). Residues 218-229 (RFDDIHPEQIPA) are compositionally biased toward basic and acidic residues.

It belongs to the HAD-like hydrolase superfamily. MasA/MtnC family. As to quaternary structure, monomer. Requires Mg(2+) as cofactor.

It catalyses the reaction 5-methylsulfanyl-2,3-dioxopentyl phosphate + H2O = 1,2-dihydroxy-5-(methylsulfanyl)pent-1-en-3-one + phosphate. It participates in amino-acid biosynthesis; L-methionine biosynthesis via salvage pathway; L-methionine from S-methyl-5-thio-alpha-D-ribose 1-phosphate: step 3/6. The protein operates within amino-acid biosynthesis; L-methionine biosynthesis via salvage pathway; L-methionine from S-methyl-5-thio-alpha-D-ribose 1-phosphate: step 4/6. In terms of biological role, bifunctional enzyme that catalyzes the enolization of 2,3-diketo-5-methylthiopentyl-1-phosphate (DK-MTP-1-P) into the intermediate 2-hydroxy-3-keto-5-methylthiopentenyl-1-phosphate (HK-MTPenyl-1-P), which is then dephosphorylated to form the acireductone 1,2-dihydroxy-3-keto-5-methylthiopentene (DHK-MTPene). This chain is Enolase-phosphatase E1, found in Klebsiella oxytoca.